Reading from the N-terminus, the 220-residue chain is MELYLDTANVAEVERLARIYPLAGVTTNPSIIAAGKVPVWDVLPRLQKAVGPEGTLFAQTMSRDAQGMVEEAKRLSNAVPGIVVKIPVTAEGLAAIKLLKKEGIPTLGTAVYSASQGLLAALAGAKYVAPYVNRVDAQGGDGIRMVQELQSLLEMHAPESKVLAASFKTPRQALDCLLAGCEAITLPLDVAQQMLGTPAVESAIEKFEQDWNNAFGALNL.

Catalysis depends on K85, which acts as the Schiff-base intermediate with substrate.

This sequence belongs to the transaldolase family. Type 3A subfamily. Homodecamer.

It localises to the cytoplasm. The enzyme catalyses beta-D-fructose 6-phosphate = dihydroxyacetone + D-glyceraldehyde 3-phosphate. In terms of biological role, catalyzes the reversible formation of fructose 6-phosphate from dihydroxyacetone and D-glyceraldehyde 3-phosphate via an aldolization reaction. The protein is Fructose-6-phosphate aldolase of Klebsiella pneumoniae subsp. pneumoniae (strain ATCC 700721 / MGH 78578).